Consider the following 184-residue polypeptide: dITP/XTP pyrophosphatase (184 aa).

Residue 7–12 coordinates substrate; it reads TSNPGK. Residues E36 and D65 each coordinate Mg(2+). The Proton acceptor role is filled by D65. Substrate contacts are provided by residues S66, 139–142, K162, and 167–168; these read FGFD and HR.

Belongs to the HAM1 NTPase family. Homodimer. It depends on Mg(2+) as a cofactor.

The catalysed reaction is XTP + H2O = XMP + diphosphate + H(+). It catalyses the reaction dITP + H2O = dIMP + diphosphate + H(+). It carries out the reaction ITP + H2O = IMP + diphosphate + H(+). In terms of biological role, pyrophosphatase that catalyzes the hydrolysis of nucleoside triphosphates to their monophosphate derivatives, with a high preference for the non-canonical purine nucleotides XTP (xanthosine triphosphate), dITP (deoxyinosine triphosphate) and ITP. Seems to function as a house-cleaning enzyme that removes non-canonical purine nucleotides from the nucleotide pool, thus preventing their incorporation into DNA/RNA and avoiding chromosomal lesions. In Thermococcus kodakarensis (strain ATCC BAA-918 / JCM 12380 / KOD1) (Pyrococcus kodakaraensis (strain KOD1)), this protein is dITP/XTP pyrophosphatase.